Here is a 383-residue protein sequence, read N- to C-terminus: Erythronate-4-phosphate dehydrogenase (383 aa).

The substrate site is built by serine 45 and threonine 66. NAD(+) is bound by residues aspartate 146 and threonine 175. Residue arginine 208 is part of the active site. Position 232 (aspartate 232) interacts with NAD(+). Residue glutamate 237 is part of the active site. Residue histidine 254 is the Proton donor of the active site. Glycine 257 contributes to the NAD(+) binding site.

Belongs to the D-isomer specific 2-hydroxyacid dehydrogenase family. PdxB subfamily. As to quaternary structure, homodimer.

The protein localises to the cytoplasm. The catalysed reaction is 4-phospho-D-erythronate + NAD(+) = (R)-3-hydroxy-2-oxo-4-phosphooxybutanoate + NADH + H(+). It functions in the pathway cofactor biosynthesis; pyridoxine 5'-phosphate biosynthesis; pyridoxine 5'-phosphate from D-erythrose 4-phosphate: step 2/5. Functionally, catalyzes the oxidation of erythronate-4-phosphate to 3-hydroxy-2-oxo-4-phosphonooxybutanoate. The protein is Erythronate-4-phosphate dehydrogenase of Chromohalobacter salexigens (strain ATCC BAA-138 / DSM 3043 / CIP 106854 / NCIMB 13768 / 1H11).